A 508-amino-acid chain; its full sequence is Anaerobic nitric oxide reductase transcription regulator NorR (508 aa).

Position 56 is a 4-aspartylphosphate (Asp-56). Residues 186–415 (MIGQSPAMAR…LEHAIHRAAV (230 aa)) enclose the Sigma-54 factor interaction domain. ATP is bound by residues 214 to 221 (GETGVGKE) and 277 to 286 (ADQGTLFLDE). Residues 483–502 (WAATARALELDSGNLHRLAK) constitute a DNA-binding region (H-T-H motif).

Its pathway is nitrogen metabolism; nitric oxide reduction. Required for the expression of anaerobic nitric oxide (NO) reductase, acts as a transcriptional activator for at least the norVW operon. Activation also requires sigma-54. This is Anaerobic nitric oxide reductase transcription regulator NorR from Aeromonas hydrophila subsp. hydrophila (strain ATCC 7966 / DSM 30187 / BCRC 13018 / CCUG 14551 / JCM 1027 / KCTC 2358 / NCIMB 9240 / NCTC 8049).